An 89-amino-acid chain; its full sequence is Cell division topological specificity factor (89 aa).

It belongs to the MinE family.

Functionally, prevents the cell division inhibition by proteins MinC and MinD at internal division sites while permitting inhibition at polar sites. This ensures cell division at the proper site by restricting the formation of a division septum at the midpoint of the long axis of the cell. This chain is Cell division topological specificity factor, found in Brucella anthropi (strain ATCC 49188 / DSM 6882 / CCUG 24695 / JCM 21032 / LMG 3331 / NBRC 15819 / NCTC 12168 / Alc 37) (Ochrobactrum anthropi).